A 253-amino-acid polypeptide reads, in one-letter code: uncharacterized protein (253 aa).

7–14 (GKGGVGKT) contributes to the ATP binding site.

To M.jannaschii MJ0084 and MJ0823.

This is an uncharacterized protein from Methanocaldococcus jannaschii (strain ATCC 43067 / DSM 2661 / JAL-1 / JCM 10045 / NBRC 100440) (Methanococcus jannaschii).